A 141-amino-acid chain; its full sequence is Large ribosomal subunit protein uL11 (141 aa).

This sequence belongs to the universal ribosomal protein uL11 family. As to quaternary structure, part of the ribosomal stalk of the 50S ribosomal subunit. Interacts with L10 and the large rRNA to form the base of the stalk. L10 forms an elongated spine to which L12 dimers bind in a sequential fashion forming a multimeric L10(L12)X complex. Post-translationally, one or more lysine residues are methylated.

Its function is as follows. Forms part of the ribosomal stalk which helps the ribosome interact with GTP-bound translation factors. The polypeptide is Large ribosomal subunit protein uL11 (Chlorobium phaeobacteroides (strain BS1)).